The following is a 379-amino-acid chain: Dual-specificity RNA methyltransferase RlmN (379 aa).

The active-site Proton acceptor is glutamate 90. In terms of domain architecture, Radical SAM core spans 96-348; the sequence is EPNRGTLCVS…TTVRKTRGDD (253 aa). Residues cysteine 103 and cysteine 353 are joined by a disulfide bond. The [4Fe-4S] cluster site is built by cysteine 110, cysteine 114, and cysteine 117. Residues 179–180, serine 211, 233–235, and asparagine 310 each bind S-adenosyl-L-methionine; these read GE and SLH. Cysteine 353 (S-methylcysteine intermediate) is an active-site residue.

The protein belongs to the radical SAM superfamily. RlmN family. [4Fe-4S] cluster is required as a cofactor.

It localises to the cytoplasm. It carries out the reaction adenosine(2503) in 23S rRNA + 2 reduced [2Fe-2S]-[ferredoxin] + 2 S-adenosyl-L-methionine = 2-methyladenosine(2503) in 23S rRNA + 5'-deoxyadenosine + L-methionine + 2 oxidized [2Fe-2S]-[ferredoxin] + S-adenosyl-L-homocysteine. The catalysed reaction is adenosine(37) in tRNA + 2 reduced [2Fe-2S]-[ferredoxin] + 2 S-adenosyl-L-methionine = 2-methyladenosine(37) in tRNA + 5'-deoxyadenosine + L-methionine + 2 oxidized [2Fe-2S]-[ferredoxin] + S-adenosyl-L-homocysteine. In terms of biological role, specifically methylates position 2 of adenine 2503 in 23S rRNA and position 2 of adenine 37 in tRNAs. m2A2503 modification seems to play a crucial role in the proofreading step occurring at the peptidyl transferase center and thus would serve to optimize ribosomal fidelity. In Nitrosomonas eutropha (strain DSM 101675 / C91 / Nm57), this protein is Dual-specificity RNA methyltransferase RlmN.